We begin with the raw amino-acid sequence, 432 residues long: MTPDDIAGFYAKRADLDLDNYIELDFDFECAGDPHEAAAHLCSEQSTAQWRRVGFDEDFRPRFAAKVLELSAEPRPSGFSVPVECAARGPVHACRVTIAHPHGNFGAKIPNLLSAVCGEGVFFSPGIPLIRLQDIRFPEPYLAAFDGPRFGIAGVRERLQAFDRPIFFGVIKPNIGLPPQPFAELGYQSWTGGLDIAKDDEMLADVDWCPLAERAALLGDACRRASAETGVPKIYLANITDEVDRLTELHDVAVANGAGALLINAMPVGLSAVRMLRKHATVPLIAHFPFIAAFSRLANYGIHSRVMTRLQRLAGFDVVIMPGFGPRMMTPEHEVLDCIRACLEPMGPIKPCLPVPGGSDSAATLENVYRKVGSADFGFVPGRGVFGHPMGPAAGATSIRQAWDAIAAGIPVPDHAASHPELAAALRAFGGR.

3 residues coordinate Mg(2+): lysine 198, aspartate 200, and glutamate 201. Lysine 198 carries the N6-carboxylysine modification.

The protein belongs to the RuBisCO large chain family. Type IV subfamily. As to quaternary structure, homodimer. Mg(2+) serves as cofactor.

May be involved in sulfur metabolism and oxidative stress response. Does not show RuBisCO activity. The sequence is that of Ribulose bisphosphate carboxylase-like protein 2 (rlp2) from Rhodopseudomonas palustris (strain ATCC BAA-98 / CGA009).